A 1172-amino-acid polypeptide reads, in one-letter code: Lysylphosphatidylglycerol biosynthesis bifunctional protein LysX (1172 aa).

The tract at residues 1–34 (MGLHLTVPGLRRDGRGVQSNSHDTSSKTTADISR) is disordered. The interval 1–663 (MGLHLTVPGL…LLHHDGSAPD (663 aa)) is phosphatidylglycerol lysyltransferase. A compositionally biased stretch (polar residues) spans 17-31 (VQSNSHDTSSKTTAD). A run of 7 helical transmembrane segments spans residues 80 to 100 (VPAAAGWTVGVIATLSLLASV), 122 to 142 (FPDTNFAWSFVLALLAAALTA), 146 to 166 (IAWLVLLANMVLAAVVNAAEI), 177 to 197 (FGENLGFAVHVVAIVVLVLGY), 214 to 234 (AVWLAGAVVGIVASWGLVELF), 272 to 292 (AIFGLFGAFALIGAAIVLFLS), and 612 to 632 (VIPRVGVASVIAEGFLVLPFS). The interval 664-1172 (VSGLRQVGLT…TLPFPLAKPH (509 aa)) is lysine--tRNA ligase. The OB DNA-binding region spans 726–804 (VSVSGRIMRI…SLIVSGWRLI (79 aa)). Residues Asp1084 and Glu1091 each contribute to the Mg(2+) site.

The protein in the N-terminal section; belongs to the LPG synthetase family. It in the C-terminal section; belongs to the class-II aminoacyl-tRNA synthetase family. It depends on Mg(2+) as a cofactor.

It localises to the cell membrane. It carries out the reaction tRNA(Lys) + L-lysine + ATP = L-lysyl-tRNA(Lys) + AMP + diphosphate. The enzyme catalyses L-lysyl-tRNA(Lys) + a 1,2-diacyl-sn-glycero-3-phospho-(1'-sn-glycerol) = a 1,2-diacyl-sn-glycero-3-phospho-1'-(3'-O-L-lysyl)-sn-glycerol + tRNA(Lys). In terms of biological role, catalyzes the production of L-lysyl-tRNA(Lys)transfer and the transfer of a lysyl group from L-lysyl-tRNA(Lys) to membrane-bound phosphatidylglycerol (PG), which produces lysylphosphatidylglycerol (LPG), one of the components of the bacterial membrane with a positive net charge. LPG synthesis contributes to the resistance to cationic antimicrobial peptides (CAMPs) and likely protects M.tuberculosis against the CAMPs produced by competiting microorganisms (bacteriocins). In fact, the modification of anionic phosphatidylglycerol with positively charged L-lysine results in repulsion of the peptides. The polypeptide is Lysylphosphatidylglycerol biosynthesis bifunctional protein LysX (lysX) (Mycobacterium tuberculosis (strain F11)).